Here is a 232-residue protein sequence, read N- to C-terminus: Large ribosomal subunit protein uL1 (232 aa).

It belongs to the universal ribosomal protein uL1 family. As to quaternary structure, part of the 50S ribosomal subunit.

Functionally, binds directly to 23S rRNA. The L1 stalk is quite mobile in the ribosome, and is involved in E site tRNA release. In terms of biological role, protein L1 is also a translational repressor protein, it controls the translation of the L11 operon by binding to its mRNA. This is Large ribosomal subunit protein uL1 from Stenotrophomonas maltophilia (strain K279a).